We begin with the raw amino-acid sequence, 1669 residues long: Polycomb group protein Asx (1669 aa).

The disordered stretch occupies residues 90–109; sequence IPPEKKPMAPSEEAAVSTAP. Residues 215–338 form the DEUBAD domain; that stretch reads PDSILASTNL…FEPFWGEKNS (124 aa). 2 short sequence motifs (LXXLL motif) span residues 224-228 and 244-248; these read LRALL and LIQLL. The NEF motif signature appears at 283-285; sequence NEF. Basic and acidic residues predominate over residues 336-352; it reads KNSRGKDKDKLESDCKN. Disordered regions lie at residues 336–378, 410–478, 635–718, 952–972, 1174–1193, 1398–1437, 1482–1505, and 1587–1610; these read KNSR…QQAT, SSTF…IVPN, FFTS…SAGA, MPHQ…QQQR, QQQS…QQQL, PGPG…PEQL, LHSI…TAGS, and SPTA…QHQH. Composition is skewed to polar residues over residues 367 to 378, 413 to 425, and 434 to 450; these read ATSQQKPLQQAT, FPPT…VLNE, and PSSS…TIAT. A compositionally biased stretch (basic and acidic residues) spans 465–474; that stretch reads KDSKQPKMDE. The segment covering 635–650 has biased composition (low complexity); sequence FFTSSSSSNTATTAAN. Positions 651–661 are enriched in basic and acidic residues; it reads KLEEHSDKPED. A compositionally biased stretch (low complexity) spans 666 to 718; it reads IASSISGSTPASSITSTSCTSSSSSSASMSSSCSSSNSGSTTTAPTTSSSAGA. 2 stretches are compositionally biased toward low complexity: residues 1174–1192 and 1404–1436; these read QQQS…QQQQ and TATA…APEQ. The span at 1592–1610 shows a compositional bias: low complexity; sequence PSPINQQPQSQPTGTQHQH. The segment at 1602-1666 adopts a PHD-type; atypical zinc-finger fold; the sequence is QPTGTQHQHP…IGAAKLCVAC (65 aa).

Belongs to the Asx family. As to quaternary structure, component of the polycomb repressive deubiquitinase (PR-DUB) complex, at least composed of caly/calypso, Asx and sba (MBD5/6 homolog). Interacts (via DEUBAD domain) with caly/calypso (via ULD domain); the interaction produces a stable heterodimer with a composite binding site for ubiquitin. Two copies of the caly-Asx heterodimer assemble into a bidentate tetramer. Interacts (via PHD domain) with sba (probably via MBD domain); the interaction is important for the stability of the PR-DUB complex. Interacts with tant. Interacts with cyclin CycG. Highly expressed in nurse cells and deposited in oocytes late in oogenesis. Ubiquitous in early embryos. Late embryos show higher levels in CNS and neurectoderm.

The protein resides in the nucleus. Its subcellular location is the chromosome. Non-catalytic component of the polycomb repressive deubiquitinase (PR-DUB) complex, a complex that specifically mediates deubiquitination of histone H2A monoubiquitinated at 'Lys-119' (H2AK118ub1). Activator of the PR-DUB complex involved in ubiquitin binding and allosteric activation of calypso deubiquitinase activity. PR-DUB does not deubiquitinate monoubiquitinated histone H2B. PR-DUB is required to maintain the transcriptionally repressive state of homeotic genes throughout development. The PR-DUB complex has weak or no activity toward 'Lys-48'- and 'Lys-63'-linked polyubiquitin chains. Atypical Polycomb group protein, which may be involved in both Polycomb group (PcG) and trithorax group (trxG) complexes. PcG and trxG proteins act by forming multiprotein complexes, which are respectively required to maintain the transcriptionally repressive and transcriptionally active state of homeotic genes throughout development. PcG and trxG protein complexes are not required to initiate repression and activation, but to maintain it during later stages of development. In Drosophila melanogaster (Fruit fly), this protein is Polycomb group protein Asx.